Here is a 158-residue protein sequence, read N- to C-terminus: Single-stranded DNA-binding protein 2 (158 aa).

The region spanning 1–107 (MNETIVCVVG…IDALAVGHDL (107 aa)) is the SSB domain. A disordered region spans residues 109–158 (RGTSAFRRPSAKDGEAGVSPAARPEPNWETEPGSQPSVEHQPQPEPAGVT).

Homotetramer.

The sequence is that of Single-stranded DNA-binding protein 2 (ssb2) from Streptomyces avermitilis (strain ATCC 31267 / DSM 46492 / JCM 5070 / NBRC 14893 / NCIMB 12804 / NRRL 8165 / MA-4680).